The chain runs to 165 residues: Phosphopantetheine adenylyltransferase (165 aa).

Thr9 is a binding site for substrate. ATP contacts are provided by residues 9-10 (TF) and His17. Substrate is bound by residues Lys41, Leu78, and Arg92. ATP-binding positions include 93-95 (GLR), Glu103, and 128-134 (HQAIASK).

Belongs to the bacterial CoaD family. Homohexamer. Mg(2+) serves as cofactor.

It localises to the cytoplasm. The catalysed reaction is (R)-4'-phosphopantetheine + ATP + H(+) = 3'-dephospho-CoA + diphosphate. The protein operates within cofactor biosynthesis; coenzyme A biosynthesis; CoA from (R)-pantothenate: step 4/5. Functionally, reversibly transfers an adenylyl group from ATP to 4'-phosphopantetheine, yielding dephospho-CoA (dPCoA) and pyrophosphate. The chain is Phosphopantetheine adenylyltransferase from Ruegeria sp. (strain TM1040) (Silicibacter sp.).